A 384-amino-acid chain; its full sequence is 8-amino-7-oxononanoate synthase (384 aa).

Substrate is bound at residue R21. G108–F109 provides a ligand contact to pyridoxal 5'-phosphate. Residue H133 coordinates substrate. Pyridoxal 5'-phosphate contacts are provided by S179, H207, and T233. Residue K236 is modified to N6-(pyridoxal phosphate)lysine. T352 is a binding site for substrate.

This sequence belongs to the class-II pyridoxal-phosphate-dependent aminotransferase family. BioF subfamily. As to quaternary structure, homodimer. Requires pyridoxal 5'-phosphate as cofactor.

The catalysed reaction is 6-carboxyhexanoyl-[ACP] + L-alanine + H(+) = (8S)-8-amino-7-oxononanoate + holo-[ACP] + CO2. Its pathway is cofactor biosynthesis; biotin biosynthesis. In terms of biological role, catalyzes the decarboxylative condensation of pimeloyl-[acyl-carrier protein] and L-alanine to produce 8-amino-7-oxononanoate (AON), [acyl-carrier protein], and carbon dioxide. This chain is 8-amino-7-oxononanoate synthase, found in Escherichia coli O9:H4 (strain HS).